Here is a 385-residue protein sequence, read N- to C-terminus: 8-amino-7-oxononanoate synthase (385 aa).

Arg-21 serves as a coordination point for substrate. 108 to 109 lines the pyridoxal 5'-phosphate pocket; it reads GF. Residue His-133 participates in substrate binding. Residues Ser-179, His-207, and Thr-233 each contribute to the pyridoxal 5'-phosphate site. Residue Lys-236 is modified to N6-(pyridoxal phosphate)lysine. Thr-352 is a substrate binding site.

The protein belongs to the class-II pyridoxal-phosphate-dependent aminotransferase family. BioF subfamily. Homodimer. Requires pyridoxal 5'-phosphate as cofactor.

The enzyme catalyses 6-carboxyhexanoyl-[ACP] + L-alanine + H(+) = (8S)-8-amino-7-oxononanoate + holo-[ACP] + CO2. It functions in the pathway cofactor biosynthesis; biotin biosynthesis. Its function is as follows. Catalyzes the decarboxylative condensation of pimeloyl-[acyl-carrier protein] and L-alanine to produce 8-amino-7-oxononanoate (AON), [acyl-carrier protein], and carbon dioxide. This Salmonella arizonae (strain ATCC BAA-731 / CDC346-86 / RSK2980) protein is 8-amino-7-oxononanoate synthase.